The sequence spans 680 residues: Trehalase (680 aa).

The interval 1–27 (MVLHAQPPDQSTETAREAKALAGATDG) is disordered.

This sequence belongs to the glycosyl hydrolase 15 family. As to quaternary structure, homomultimer. Phosphate serves as cofactor.

The enzyme catalyses alpha,alpha-trehalose + H2O = alpha-D-glucose + beta-D-glucose. Its pathway is glycan degradation; trehalose degradation; D-glucose from alpha,alpha-trehalose: step 1/1. Functionally, catalyzes the hydrolysis of alpha,alpha-trehalose into two molecules of D-glucose. The chain is Trehalase from Mycobacterium tuberculosis (strain ATCC 25618 / H37Rv).